The sequence spans 620 residues: Mitochondrial Rho GTPase 2 (620 aa).

At 1–594 (MRRDVRILLL…ELHPTSFWLR (594 aa)) the chain is on the cytoplasmic side. A Miro 1 domain is found at 2 to 168 (RRDVRILLLG…FYYAQKAVLH (167 aa)). Positions 16, 17, 18, and 19 each coordinate GTP. Threonine 18 is a Mg(2+) binding site. Aspartate 57 is a Mg(2+) binding site. A GTP-binding site is contributed by serine 59. Lysine 96 participates in a covalent cross-link: Glycyl lysine isopeptide (Lys-Gly) (interchain with G-Cter in ubiquitin). Positions 118, 119, 121, 149, and 150 each coordinate GTP. Residue lysine 119 forms a Glycyl lysine isopeptide (Lys-Gly) (interchain with G-Cter in ubiquitin) linkage. Lysine 164 is covalently cross-linked (Glycyl lysine isopeptide (Lys-Gly) (interchain with G-Cter in ubiquitin)). EF-hand domains are found at residues 184–219 (ACAQALTRIFRLSDQDRDHGLSDEELNAFQKSCFGH) and 304–339 (RGYQFVQRMFEKHDQDHDGVLSPTELQNLFSVFSGA). Residues aspartate 197, aspartate 199, aspartate 201, glutamate 208, aspartate 317, aspartate 319, aspartate 321, and glutamate 328 each contribute to the Ca(2+) site. The 164-residue stretch at 415-578 (RSVLMCKVLG…FTQLATMATF (164 aa)) folds into the Miro 2 domain. GTP-binding residues include glycine 427, glycine 429, lysine 430, serine 431, and alanine 432. Mg(2+) is bound at residue serine 431. Glutamate 473 provides a ligand contact to Mg(2+). Residues lysine 527, aspartate 529, and cysteine 558 each coordinate GTP. Residues 595–617 (GVLVAVGTAVAAVLSFSLYRVLV) traverse the membrane as a helical; Anchor for type IV membrane protein segment. At 618–620 (KSR) the chain is on the mitochondrial intermembrane side.

It belongs to the mitochondrial Rho GTPase family. In terms of assembly, homodimer. Interacts with the kinesin-binding proteins TRAK1/OIP106 and TRAK2/GRIF1, forming a link between mitochondria and the trafficking apparatus of the microtubules. Interacts with ARMCX3. Found in a complex with KIF5B, OGT, RHOT1 and TRAK1. In terms of processing, ubiquitinated by PRKN in a PINK1-dependent manner, leading to its degradation. As to expression, ubiquitously expressed.

Its subcellular location is the mitochondrion outer membrane. The catalysed reaction is GTP + H2O = GDP + phosphate + H(+). It catalyses the reaction ATP + H2O = ADP + phosphate + H(+). It carries out the reaction UTP + H2O = UDP + phosphate + H(+). Its function is as follows. Atypical mitochondrial nucleoside-triphosphatase (NTPase) involved in mitochondrial trafficking. Probably involved in control of anterograde transport of mitochondria and their subcellular distribution. Can hydrolyze GTP, ATP and UTP. This Mus musculus (Mouse) protein is Mitochondrial Rho GTPase 2 (Rhot2).